A 641-amino-acid polypeptide reads, in one-letter code: Putative ABC transporter ATP-binding protein MA_0870 (641 aa).

One can recognise an ABC transporter 1 domain in the interval 10-250 (IEIKDLWYTY…IEVFHRLGLR (241 aa)). 44-51 (GPTGCGKS) contributes to the ATP binding site. Residues 286-332 (VKTPRNFSNPEEETGRRTDPAERNEFVNTGSGNIKYGDNRSENKGSE) form a disordered region. Basic and acidic residues-rich tracts occupy residues 298-310 (ETGR…ERNE) and 322-332 (GDNRSENKGSE). In terms of domain architecture, ABC transporter 2 spans 338 to 566 (ISIRDLWSGY…IEILKQASLT (229 aa)). 371 to 378 (GTNGSGKS) contacts ATP.

Belongs to the ABC transporter superfamily.

It is found in the cell membrane. Probably part of an ABC transporter complex. Responsible for energy coupling to the transport system. This chain is Putative ABC transporter ATP-binding protein MA_0870, found in Methanosarcina acetivorans (strain ATCC 35395 / DSM 2834 / JCM 12185 / C2A).